The primary structure comprises 106 residues: Large ribosomal subunit protein eL42 (106 aa).

Residues Phe36–Pro56 are disordered.

It belongs to the eukaryotic ribosomal protein eL42 family.

This is Large ribosomal subunit protein eL42 (RPL44) from Phaffia rhodozyma (Yeast).